A 1580-amino-acid chain; its full sequence is Collagen alpha-1(XVI) chain (1580 aa).

An N-terminal signal peptide occupies residues M1–G21. N47 is a glycosylation site (N-linked (GlcNAc...) asparagine). The Laminin G-like domain maps to G50–P231. Residues E232 to E374 form a nonhelical region 10 (NC10) region. The segment at R324–G547 is disordered. The N-linked (GlcNAc...) asparagine glycan is linked to N327. A Collagen-like 1 domain is found at G375–E424. The tract at residues G375 to P509 is triple-helical region 9 (COL9) with 3 imperfections. Residues P449 to I460 show a composition bias toward pro residues. Residues G486–G495 show a composition bias toward gly residues. Positions C510–V524 are nonhelical region 9 (NC9). Residues G525 to P570 form a triple-helical region 8 (COL8) with 1 imperfection region. Residues R555–D557 carry the Cell attachment site motif. Positions C571 to S586 are nonhelical region 8 (NC8). The span at P585 to S598 shows a compositional bias: low complexity. A disordered region spans residues P585–E935. Positions P587–P640 are triple-helical region 7 (COL7) with 1 imperfection. 2 Collagen-like domains span residues G590–P643 and G676–P725. The tract at residues C641 to P661 is nonhelical region 7 (NC7). The tract at residues G662–G732 is triple-helical region 6 (COL6) with 1 imperfection. Residues K683–K693 show a composition bias toward basic and acidic residues. The segment covering N698–S714 has biased composition (low complexity). Positions C733–S747 are nonhelical region 6 (NC6). The interval G748 to C870 is triple-helical region 5 (COL5) with 3 imperfections. Residues G797–G848 form the Collagen-like 4 domain. Positions P801–P817 are enriched in low complexity. Residues S871–S881 are nonhelical region 5 (NC5). The tract at residues G882–T933 is triple-helical region 4 (COL4) with 2 imperfections. Residues P899–M914 show a composition bias toward pro residues. Positions A934–K967 are nonhelical region 4 (NC4). The triple-helical region 3 (COL3) stretch occupies residues G968–D982. Residues N983–E1005 are nonhelical region 3 (NC3). 2 disordered regions span residues R995 to S1405 and A1445 to K1523. The Cell attachment site motif lies at R1000 to D1002. Residues G1006 to G1063 enclose the Collagen-like 5 domain. Residues G1006–M1409 form a triple-helical region 2 (COL2) with 2 imperfections region. The segment covering S1098 to P1107 has biased composition (low complexity). 2 stretches are compositionally biased toward pro residues: residues F1139–F1148 and S1178–I1187. Positions L1196–L1205 are enriched in basic and acidic residues. The Cell attachment site motif lies at R1206–D1208. A Collagen-like 6 domain is found at G1210–Q1263. Residues S1247–Q1263 show a composition bias toward low complexity. The segment covering R1265–P1281 has biased composition (pro residues). Collagen-like domains lie at G1350–G1407, P1448–G1500, and A1504–G1552. Positions G1362–G1371 are enriched in gly residues. A compositionally biased stretch (low complexity) spans N1396–S1405. Positions V1410–P1448 are nonhelical region 2 (NC2). The triple-helical region 1 (COL1) with 2 imperfections stretch occupies residues G1449–C1554. Residues N1555–G1580 form a nonhelical region 1 (NC1) region.

Belongs to the fibril-associated collagens with interrupted helices (FACIT) family. Homotrimer. Interacts with FBN1, fibronectin and integrins ITGA1/ITGB1 and ITGA2/ITGB1. Integrin ITGA1/ITGB1 binds to a unique site within COL16A1 located close to its C-terminal end between collagenous domains COL1-COL3. Prolines at the third position of the tripeptide repeating unit (G-X-Y) are hydroxylated in some or all of the chains. Post-translationally, glycosylated. Expressed in most tissues examined with highest levels of expression observed in heart. Strongly expressed in cortical and medullar regions of kidney and more weakly expressed in lung. Also detected in the ciliary muscle of the eye, on the serosa layer lining the muscularis externa of intestinal tissue, and in the perimysium membrane lining both the cardiac muscle bundle and the smooth muscle tissue of the small intestine. Strongly stained in particulate or granular structures. Not detected in brain or skeletal muscle.

Its subcellular location is the secreted. It is found in the extracellular space. The protein localises to the extracellular matrix. In terms of biological role, involved in mediating cell attachment and inducing integrin-mediated cellular reactions, such as cell spreading and alterations in cell morphology. In Mus musculus (Mouse), this protein is Collagen alpha-1(XVI) chain.